Reading from the N-terminus, the 435-residue chain is Asparagine--tRNA ligase (435 aa).

Belongs to the class-II aminoacyl-tRNA synthetase family. Homodimer.

The protein resides in the cytoplasm. It catalyses the reaction tRNA(Asn) + L-asparagine + ATP = L-asparaginyl-tRNA(Asn) + AMP + diphosphate + H(+). The sequence is that of Asparagine--tRNA ligase from Leptospira borgpetersenii serovar Hardjo-bovis (strain JB197).